Reading from the N-terminus, the 452-residue chain is MSRKKSNGGLRFQPAGGNRATQIPVGKKQRLLIERVAGDGRGIAFIEGRTWFVSGALGGEEVEARVLGARGKVVEARLERVFQASPERREAPCRHYARCGGCNLQHLPHDGQLALKQRLLAEQLQRVAGVQPEEWAAPLCGPEFGYRRRARVAVRWDVKQRQLDVGFRAEASQDIVAIDDCPVLVQPLQAIMRHLPTVLRSLSKPQTLGHVELFSGTAEAVLVRHVAALPAEDLARLEAFCREAGAQLWLQGEGDPAPVDAAQRLGFALEPWGMELAWRPGDFVQVNAQVNTLMIQQALAWLAPQAHERVLDLFCGLGNFALPLARQAREVVAVEGVQAMVERAEANAHGNNVYNARFFQADLSQPLAGAEWVAEGFSAVLLDPPRDGAYEVVQGIARLGAKRLVYVSCNPATLARDTQVLVGQGYRLKRAGILDMFPQTAHVEAMALFEAG.

The tract at residues 1-23 is disordered; it reads MSRKKSNGGLRFQPAGGNRATQI. The TRAM domain maps to 22–80; sequence QIPVGKKQRLLIERVAGDGRGIAFIEGRTWFVSGALGGEEVEARVLGARGKVVEARLER. Cys-93, Cys-99, Cys-102, and Cys-181 together coordinate [4Fe-4S] cluster. S-adenosyl-L-methionine-binding residues include Gln-285, Phe-314, Asn-319, Glu-335, Asp-362, and Asp-383. Cys-409 functions as the Nucleophile in the catalytic mechanism.

This sequence belongs to the class I-like SAM-binding methyltransferase superfamily. RNA M5U methyltransferase family. RlmD subfamily.

It catalyses the reaction uridine(1939) in 23S rRNA + S-adenosyl-L-methionine = 5-methyluridine(1939) in 23S rRNA + S-adenosyl-L-homocysteine + H(+). Functionally, catalyzes the formation of 5-methyl-uridine at position 1939 (m5U1939) in 23S rRNA. In Pseudomonas entomophila (strain L48), this protein is 23S rRNA (uracil(1939)-C(5))-methyltransferase RlmD.